Consider the following 749-residue polypeptide: Probable galactinol--sucrose galactosyltransferase 6 (749 aa).

The protein belongs to the glycosyl hydrolases 36 family.

It carries out the reaction alpha-D-galactosyl-(1-&gt;3)-1D-myo-inositol + sucrose = raffinose + myo-inositol. Its function is as follows. Transglycosidase operating by a ping-pong reaction mechanism. Involved in the synthesis of raffinose, a major soluble carbohydrate in seeds, roots and tubers. The chain is Probable galactinol--sucrose galactosyltransferase 6 (RFS6) from Arabidopsis thaliana (Mouse-ear cress).